The primary structure comprises 163 residues: ADP-ribosylation factor-like protein 2-binding protein (163 aa).

This sequence belongs to the ARL2BP family. In terms of assembly, interacts with GTP bound ARL2 and ARL3; the complex ARL2-ARL2BP as well as ARL2BP alone, binds to SLC25A4/ANT1. Interaction with ARL2 may be required for cilia basal body localization. Interacts with STAT3; interaction is enhanced with ARL2. Found in a complex with ARL2BP, ARL2 and SLC25A6. Found in a complex with ARL2, ARL2BP and SLC25A4. Interacts with STAT2, STAT3 and STAT4. In terms of tissue distribution, ubiquitous with higher expression in brain, especially in hippocampus and cortex. Also expressed in lung, cerebellum, liver, kidney, spleen and heart (at protein level).

It is found in the cytoplasm. The protein resides in the mitochondrion intermembrane space. Its subcellular location is the cytoskeleton. The protein localises to the microtubule organizing center. It localises to the centrosome. It is found in the nucleus. The protein resides in the spindle. Its subcellular location is the cilium basal body. Its function is as follows. Together with ARL2, plays a role in the nuclear translocation, retention and transcriptional activity of STAT3. May play a role as an effector of ARL2. The sequence is that of ADP-ribosylation factor-like protein 2-binding protein (Arl2bp) from Rattus norvegicus (Rat).